We begin with the raw amino-acid sequence, 356 residues long: Protein translocase subunit SecY (356 aa).

8 helical membrane-spanning segments follow: residues 24-44, 77-97, 125-145, 154-174, 183-203, 217-237, 274-294, and 317-337; these read LFVIGALIVFRIGSFIPIPGI, IFALGIMPYISASIIIQLLTV, LVLAIFQSIGIATGLPNMPGM, FAFYFTAVVSLVTGTMFLMWL, IGNGISIIIFAGIVAGLPPAV, FLLLLLVAVLVFAVTFFVVFI, VIPAIFASSIILFPATIASWF, and YVLLYASAIIFFCFFYTALVF.

Belongs to the SecY/SEC61-alpha family. As to quaternary structure, component of the Sec protein translocase complex. Heterotrimer consisting of SecY, SecE and SecG subunits. The heterotrimers can form oligomers, although 1 heterotrimer is thought to be able to translocate proteins. Interacts with the ribosome. Interacts with SecDF, and other proteins may be involved. Interacts with SecA.

The protein localises to the cell membrane. The central subunit of the protein translocation channel SecYEG. Consists of two halves formed by TMs 1-5 and 6-10. These two domains form a lateral gate at the front which open onto the bilayer between TMs 2 and 7, and are clamped together by SecE at the back. The channel is closed by both a pore ring composed of hydrophobic SecY resides and a short helix (helix 2A) on the extracellular side of the membrane which forms a plug. The plug probably moves laterally to allow the channel to open. The ring and the pore may move independently. The sequence is that of Protein translocase subunit SecY from Buchnera aphidicola subsp. Acyrthosiphon kondoi (Acyrthosiphon kondoi symbiotic bacterium).